We begin with the raw amino-acid sequence, 549 residues long: Leiomodin-2 (549 aa).

The tract at residues 1–42 is tropomyosin-binding; that stretch reads MSTFGYRRGLSKYESIDEDELLASLTAEELKELERELEDIEP. Residues 1 to 47 are interaction with tropomyosin alpha; that stretch reads MSTFGYRRGLSKYESIDEDELLASLTAEELKELERELEDIEPDRNLP. Interaction with actin stretches follow at residues 1–164, 165–499, and 523–542; these read MSTF…PDNS, KPKT…KEIK, and AHEN…LRRV. Residues Ser11, Ser15, and Ser24 each carry the phosphoserine modification. Disordered regions lie at residues 91-166, 179-200, 358-455, and 469-534; these read KLAE…NSKP, TNGN…HPCG, MDKQ…PGKK, and ESAQ…IRGS. 2 stretches are compositionally biased toward acidic residues: residues 95–105 and 113–143; these read EDKEESEEELI and VSEE…EEVT. Composition is skewed to polar residues over residues 150–163 and 179–192; these read INGT…NPDN and TNGN…NTES. Residues 358 to 376 show a composition bias toward basic and acidic residues; it reads MDKQRQKRMQEQKQQEGHD. The span at 390–401 shows a compositional bias: polar residues; the sequence is TPGSSPYASPRQ. Phosphoserine is present on Ser406. A compositionally biased stretch (pro residues) spans 420–452; the sequence is PPSPVAPPPPPPPPPLPPHMLPPPPPPPAPPLP. A coiled-coil region spans residues 457 to 515; the sequence is ITRNIAEVIKQQESAQRALQNGQRKKKGKKVKKQPNNILKEIKNSLRSVQEKKMEESSR. The segment covering 469–478 has biased composition (polar residues); that stretch reads ESAQRALQNG. Residues 479 to 489 show a composition bias toward basic residues; the sequence is QRKKKGKKVKK. The segment covering 496–514 has biased composition (basic and acidic residues); sequence KEIKNSLRSVQEKKMEESS. In terms of domain architecture, WH2 spans 523–542; it reads AHENLMEAIRGSSIRQLRRV.

It belongs to the tropomodulin family. In terms of assembly, can bind at least three actin monomers and thereby provides a nucleus for actin filament formation. Interacts (via N-terminus) with tropomyosin alpha (TPM1) (via N-terminus). May also interact with TPM2 (via N-terminus). Interacts with FLII.

The protein resides in the cytoplasm. It localises to the myofibril. The protein localises to the sarcomere. Its subcellular location is the m line. It is found in the cytoskeleton. Mediates nucleation of actin filaments and thereby promotes actin polymerization. Plays a role in the regulation of actin filament length. Required for normal sarcomere organization in the heart, and for normal heart function. This Rattus norvegicus (Rat) protein is Leiomodin-2 (Lmod2).